A 301-amino-acid chain; its full sequence is Homoserine kinase (301 aa).

Lys89–Ala99 is an ATP binding site.

It belongs to the GHMP kinase family. Homoserine kinase subfamily.

The protein resides in the cytoplasm. It carries out the reaction L-homoserine + ATP = O-phospho-L-homoserine + ADP + H(+). It functions in the pathway amino-acid biosynthesis; L-threonine biosynthesis; L-threonine from L-aspartate: step 4/5. Catalyzes the ATP-dependent phosphorylation of L-homoserine to L-homoserine phosphate. The sequence is that of Homoserine kinase from Methanococcus maripaludis (strain DSM 14266 / JCM 13030 / NBRC 101832 / S2 / LL).